The chain runs to 544 residues: Chaperonin GroEL (544 aa).

ATP is bound by residues 29–32 (TLGP), Lys-50, 86–90 (DGTTT), Gly-415, and Asp-495.

This sequence belongs to the chaperonin (HSP60) family. As to quaternary structure, forms a cylinder of 14 subunits composed of two heptameric rings stacked back-to-back. Interacts with the co-chaperonin GroES.

Its subcellular location is the cytoplasm. It carries out the reaction ATP + H2O + a folded polypeptide = ADP + phosphate + an unfolded polypeptide.. Functionally, together with its co-chaperonin GroES, plays an essential role in assisting protein folding. The GroEL-GroES system forms a nano-cage that allows encapsulation of the non-native substrate proteins and provides a physical environment optimized to promote and accelerate protein folding. In Tannerella forsythia (Bacteroides forsythus), this protein is Chaperonin GroEL.